Here is a 190-residue protein sequence, read N- to C-terminus: Potassium-transporting ATPase KdpC subunit (190 aa).

Residues 10–30 (VLFAVLTLICGVIYPYAITGI) traverse the membrane as a helical segment.

The protein belongs to the KdpC family. As to quaternary structure, the system is composed of three essential subunits: KdpA, KdpB and KdpC.

It is found in the cell inner membrane. Part of the high-affinity ATP-driven potassium transport (or Kdp) system, which catalyzes the hydrolysis of ATP coupled with the electrogenic transport of potassium into the cytoplasm. This subunit acts as a catalytic chaperone that increases the ATP-binding affinity of the ATP-hydrolyzing subunit KdpB by the formation of a transient KdpB/KdpC/ATP ternary complex. The sequence is that of Potassium-transporting ATPase KdpC subunit from Herminiimonas arsenicoxydans.